The chain runs to 237 residues: Ribosomal RNA small subunit methyltransferase G (237 aa).

S-adenosyl-L-methionine contacts are provided by residues Gly-78, Phe-83, Ala-129 to Glu-130, and Arg-148.

The protein belongs to the methyltransferase superfamily. RNA methyltransferase RsmG family.

The protein localises to the cytoplasm. Its function is as follows. Specifically methylates the N7 position of a guanine in 16S rRNA. The sequence is that of Ribosomal RNA small subunit methyltransferase G from Streptococcus pyogenes serotype M6 (strain ATCC BAA-946 / MGAS10394).